Reading from the N-terminus, the 520-residue chain is ATP-dependent clpX-like chaperone, mitochondrial (520 aa).

The N-terminal 13 residues, 1 to 13 (MLKSASQNFFRAY), are a transit peptide targeting the mitochondrion. Residue 140–147 (GPSGSGKT) coordinates ATP.

This sequence belongs to the ClpX chaperone family. As to quaternary structure, homohexamer that forms a ring structure; this hexamerization requires ATP binding. Interacts with HEM1.

Its subcellular location is the mitochondrion inner membrane. In terms of biological role, ATP-dependent unfoldase that stimulates the incorporation of the pyridoxal phosphate cofactor into 5-aminolevulinate synthase (HEM1), thereby activating 5-aminolevulinate (ALA) synthesis, the first step in heme biosynthesis. Up-regulates heme biosynthesis. In Saccharomyces cerevisiae (strain ATCC 204508 / S288c) (Baker's yeast), this protein is ATP-dependent clpX-like chaperone, mitochondrial.